The following is a 652-amino-acid chain: DNA ligase (652 aa).

NAD(+) contacts are provided by residues 29 to 33 (DSEYD), 78 to 79 (SL), and glutamate 107. Lysine 109 acts as the N6-AMP-lysine intermediate in catalysis. Positions 130, 164, 278, and 302 each coordinate NAD(+). Zn(2+)-binding residues include cysteine 395, cysteine 398, cysteine 413, and cysteine 418. The 76-residue stretch at 577–652 (VADAALSGLT…VRDEAWLESL (76 aa)) folds into the BRCT domain.

The protein belongs to the NAD-dependent DNA ligase family. LigA subfamily. Requires Mg(2+) as cofactor. It depends on Mn(2+) as a cofactor.

The catalysed reaction is NAD(+) + (deoxyribonucleotide)n-3'-hydroxyl + 5'-phospho-(deoxyribonucleotide)m = (deoxyribonucleotide)n+m + AMP + beta-nicotinamide D-nucleotide.. DNA ligase that catalyzes the formation of phosphodiester linkages between 5'-phosphoryl and 3'-hydroxyl groups in double-stranded DNA using NAD as a coenzyme and as the energy source for the reaction. It is essential for DNA replication and repair of damaged DNA. The sequence is that of DNA ligase from Streptococcus pneumoniae (strain Taiwan19F-14).